The chain runs to 146 residues: Phospholipase A2 147 (146 aa).

The first 19 residues, 1 to 19 (MYPAHLLVLLAVCVSLLGA), serve as a signal peptide directing secretion. Residues 20-27 (ASVPPQPL) constitute a propeptide that is removed on maturation. 7 disulfides stabilise this stretch: Cys38–Cys98, Cys54–Cys145, Cys56–Cys72, Cys71–Cys126, Cys78–Cys119, Cys87–Cys112, and Cys105–Cys117. Tyr55, Gly57, and Gly59 together coordinate Ca(2+). His75 is an active-site residue. Asp76 contacts Ca(2+). Residue Asp120 is part of the active site.

The protein belongs to the phospholipase A2 family. Group I subfamily. D49 sub-subfamily. Ca(2+) is required as a cofactor. As to expression, expressed by the venom gland.

The protein resides in the secreted. The catalysed reaction is a 1,2-diacyl-sn-glycero-3-phosphocholine + H2O = a 1-acyl-sn-glycero-3-phosphocholine + a fatty acid + H(+). Snake venom phospholipase A2 (PLA2) that inhibits collagen-induced platelet aggregation. PLA2 catalyzes the calcium-dependent hydrolysis of the 2-acyl groups in 3-sn-phosphoglycerides. This Drysdalia coronoides (White-lipped snake) protein is Phospholipase A2 147.